Reading from the N-terminus, the 593-residue chain is Isocitrate dehydrogenase kinase/phosphatase (593 aa).

Residues 315–321 (APGIRGM) and K336 contribute to the ATP site. D371 is a catalytic residue.

This sequence belongs to the AceK family.

The protein localises to the cytoplasm. The enzyme catalyses L-seryl-[isocitrate dehydrogenase] + ATP = O-phospho-L-seryl-[isocitrate dehydrogenase] + ADP + H(+). Bifunctional enzyme which can phosphorylate or dephosphorylate isocitrate dehydrogenase (IDH) on a specific serine residue. This is a regulatory mechanism which enables bacteria to bypass the Krebs cycle via the glyoxylate shunt in response to the source of carbon. When bacteria are grown on glucose, IDH is fully active and unphosphorylated, but when grown on acetate or ethanol, the activity of IDH declines drastically concomitant with its phosphorylation. This Salmonella typhi protein is Isocitrate dehydrogenase kinase/phosphatase.